Here is a 264-residue protein sequence, read N- to C-terminus: ATP synthase subunit b 1 (264 aa).

The helical transmembrane segment at Leu2 to Leu22 threads the bilayer. A disordered region spans residues Ala240 to Asp264. Residues Glu255–Asp264 are compositionally biased toward basic and acidic residues.

The protein belongs to the ATPase B chain family. In terms of assembly, F-type ATPases have 2 components, F(1) - the catalytic core - and F(0) - the membrane proton channel. F(1) has five subunits: alpha(3), beta(3), gamma(1), delta(1), epsilon(1). F(0) has four main subunits: a(1), b(2) and c(10-14). The alpha and beta chains form an alternating ring which encloses part of the gamma chain. F(1) is attached to F(0) by a central stalk formed by the gamma and epsilon chains, while a peripheral stalk is formed by the delta and b chains.

It localises to the cell inner membrane. Functionally, f(1)F(0) ATP synthase produces ATP from ADP in the presence of a proton or sodium gradient. F-type ATPases consist of two structural domains, F(1) containing the extramembraneous catalytic core and F(0) containing the membrane proton channel, linked together by a central stalk and a peripheral stalk. During catalysis, ATP synthesis in the catalytic domain of F(1) is coupled via a rotary mechanism of the central stalk subunits to proton translocation. In terms of biological role, component of the F(0) channel, it forms part of the peripheral stalk, linking F(1) to F(0). This is ATP synthase subunit b 1 from Chlorobium luteolum (strain DSM 273 / BCRC 81028 / 2530) (Pelodictyon luteolum).